Here is a 201-residue protein sequence, read N- to C-terminus: Large ribosomal subunit protein uL4 (201 aa).

Positions 45-71 (AQKTRAEVTGSGKKPWRQKGTGRARAG) are disordered.

It belongs to the universal ribosomal protein uL4 family. As to quaternary structure, part of the 50S ribosomal subunit.

Functionally, one of the primary rRNA binding proteins, this protein initially binds near the 5'-end of the 23S rRNA. It is important during the early stages of 50S assembly. It makes multiple contacts with different domains of the 23S rRNA in the assembled 50S subunit and ribosome. Forms part of the polypeptide exit tunnel. This Shewanella pealeana (strain ATCC 700345 / ANG-SQ1) protein is Large ribosomal subunit protein uL4.